Here is a 2554-residue protein sequence, read N- to C-terminus: Highly reducing polyketide synthase PKS6 (2554 aa).

The tract at residues methionine 1 to glycine 48 is disordered. Positions proline 8–glycine 48 are enriched in polar residues. The Ketosynthase family 3 (KS3) domain occupies leucine 56 to alanine 481. Residues cysteine 230, histidine 367, and histidine 407 each act as for beta-ketoacyl synthase activity in the active site. Positions valine 595–glutamate 913 are malonyl-CoA:ACP transacylase (MAT) domain. An N-terminal hotdog fold region spans residues histidine 981 to glutamate 1119. Residues histidine 981–leucine 1281 are dehydratase (DH) domain. The region spanning histidine 981–glycine 1287 is the PKS/mFAS DH domain. Histidine 1013 (proton acceptor; for dehydratase activity) is an active-site residue. Residues alanine 1137–glycine 1287 form a C-terminal hotdog fold region. The Proton donor; for dehydratase activity role is filled by aspartate 1200. A methyltransferase (CMet) domain region spans residues valine 1451–leucine 1556. The interval glycine 1840–leucine 2153 is enoyl reductase (ER) domain. Residues alanine 2177 to isoleucine 2353 are ketoreductase (KR) domain. Residues glutamate 2457–serine 2534 enclose the Carrier domain. An O-(pantetheine 4'-phosphoryl)serine modification is found at serine 2494.

The protein operates within secondary metabolite biosynthesis. Its function is as follows. Highly reducing polyketide synthase; part of the gene cluster that mediates the biosynthesis of the lipopeptide fusaristatin A. Fusaristatin A consists of a polyketide chain linked to three amino acid residues glutamine (Gln), dehydroalanine (dehydro-Ala), and beta-aminoisobutyric acid. The biosynthesis starts with formation of a linear polyketide chain by the highly reducing polyketide synthase PKS6. The gene cluster does not contain an acyl-CoA ligase or an acyl-transferase, and it is therefore predicted that the polyketide is transferred directly to the nonribosomal peptide synthetase NRPS7. Modules 1-3 from NRPS7 incorporate dehydro-Ala, Gln, and beta-aminoisobutyric acid in the compound, which is released by cyclization. The beta-aminoisobutyric acid units are most likely not freely available to the NRPS, but can be synthesized from thymine, which requires a dehydrogenase, a monooxygenase, and an aminotransferase. The fusaristatin A cluster contains a cytochrome P450 monooxygenase (FGSG_08207) and an aminotransferase (FGSG_17085), which theoretically can perform two of the enzymatic steps. The enzymes may however also be involved in biosynthesis of dehydroalanine or modification of the polyketide. The dehydro-Ala residue can be a result of cyclization, where serine is dehydrated. The last gene of the cluster encodes a protein with an A/B barrel domain found in variable enzymes, which hampers functional prediction. This is Highly reducing polyketide synthase PKS6 from Gibberella zeae (strain ATCC MYA-4620 / CBS 123657 / FGSC 9075 / NRRL 31084 / PH-1) (Wheat head blight fungus).